The primary structure comprises 388 residues: Serine/threonine-protein phosphatase sitA (388 aa).

Mn(2+) is bound by residues D67 and H69. The disordered stretch occupies residues 86–146; sequence PDGSEAEAPK…SQRDRSSSSG (61 aa). Mn(2+) contacts are provided by D161 and N193. The Proton donor role is filled by H194. H243 and H317 together coordinate Mn(2+).

Belongs to the PPP phosphatase family. PP-6 (PP-V) subfamily. Mn(2+) is required as a cofactor.

The enzyme catalyses O-phospho-L-threonyl-[protein] + H2O = L-threonyl-[protein] + phosphate. Protein phosphatase that acts as a modulator of pkcA/mpkA activity involved in the cell wall integrity pathway. Plays an important role in regulation of adhesion, cell wall integrity, biofilm formation, and virulence. The protein is Serine/threonine-protein phosphatase sitA of Aspergillus fumigatus (strain ATCC MYA-4609 / CBS 101355 / FGSC A1100 / Af293) (Neosartorya fumigata).